We begin with the raw amino-acid sequence, 875 residues long: Alanine--tRNA ligase (875 aa).

Residues histidine 562, histidine 566, cysteine 665, and histidine 669 each coordinate Zn(2+).

Belongs to the class-II aminoacyl-tRNA synthetase family. It depends on Zn(2+) as a cofactor.

The protein localises to the cytoplasm. It catalyses the reaction tRNA(Ala) + L-alanine + ATP = L-alanyl-tRNA(Ala) + AMP + diphosphate. Functionally, catalyzes the attachment of alanine to tRNA(Ala) in a two-step reaction: alanine is first activated by ATP to form Ala-AMP and then transferred to the acceptor end of tRNA(Ala). Also edits incorrectly charged Ser-tRNA(Ala) and Gly-tRNA(Ala) via its editing domain. In Saccharophagus degradans (strain 2-40 / ATCC 43961 / DSM 17024), this protein is Alanine--tRNA ligase.